Reading from the N-terminus, the 285-residue chain is MNNFLSCPAIPFPNFLDPIIIQLGPIALHWYGLGYVVGILFSWWYVQKLSHKKSLWYANYPPLNAEKASDFVVWAALGIVVGGRLGQVLIWDPTYYFNHPSSIIAVWDGGMSFHGGLIGTTIAIIWFARKHNINIWAMFDTIAAGAPFGIGVVRICNFINQELWGSVTNVPWAVCFSLDPQYLPRHPSQLYEALMEGFLLFIVLAFIIFAFKAFKRPGTVAGTFIISYGIARTISEIFRVPQEDPEWFSALFHGSGFTYGMALSLPMILFGFYAIFRAFRNHFIK.

Helical transmembrane passes span 26–46 (IALH…WWYV), 71–91 (FVVW…VLIW), 107–127 (WDGG…IIWF), and 133–153 (INIW…IGVV). R154 is an a 1,2-diacyl-sn-glycero-3-phospho-(1'-sn-glycerol) binding site. The next 3 helical transmembrane spans lie at 194-214 (LMEG…FKAF), 218-238 (GTVA…SEIF), and 256-276 (GFTY…YAIF).

This sequence belongs to the Lgt family.

It localises to the cell inner membrane. The enzyme catalyses L-cysteinyl-[prolipoprotein] + a 1,2-diacyl-sn-glycero-3-phospho-(1'-sn-glycerol) = an S-1,2-diacyl-sn-glyceryl-L-cysteinyl-[prolipoprotein] + sn-glycerol 1-phosphate + H(+). It functions in the pathway protein modification; lipoprotein biosynthesis (diacylglyceryl transfer). In terms of biological role, catalyzes the transfer of the diacylglyceryl group from phosphatidylglycerol to the sulfhydryl group of the N-terminal cysteine of a prolipoprotein, the first step in the formation of mature lipoproteins. This is Phosphatidylglycerol--prolipoprotein diacylglyceryl transferase from Bartonella bacilliformis (strain ATCC 35685 / KC583 / Herrer 020/F12,63).